A 233-amino-acid polypeptide reads, in one-letter code: Large ribosomal subunit protein uL1 (233 aa).

This sequence belongs to the universal ribosomal protein uL1 family. As to quaternary structure, part of the 50S ribosomal subunit.

Functionally, binds directly to 23S rRNA. The L1 stalk is quite mobile in the ribosome, and is involved in E site tRNA release. Its function is as follows. Protein L1 is also a translational repressor protein, it controls the translation of the L11 operon by binding to its mRNA. This is Large ribosomal subunit protein uL1 from Pseudoalteromonas atlantica (strain T6c / ATCC BAA-1087).